A 306-amino-acid polypeptide reads, in one-letter code: Curved DNA-binding protein (306 aa).

The region spanning 5 to 69 is the J domain; sequence DYYAIMGVKP…QRRAEYDQMW (65 aa).

The protein localises to the cytoplasm. Its subcellular location is the nucleoid. Its function is as follows. DNA-binding protein that preferentially recognizes a curved DNA sequence. It is probably a functional analog of DnaJ; displays overlapping activities with DnaJ, but functions under different conditions, probably acting as a molecular chaperone in an adaptive response to environmental stresses other than heat shock. Lacks autonomous chaperone activity; binds native substrates and targets them for recognition by DnaK. Its activity is inhibited by the binding of CbpM. This is Curved DNA-binding protein from Shigella flexneri.